We begin with the raw amino-acid sequence, 75 residues long: MGSIRPFNVKRTAEELADKFPNVFGDKFEENKKKLEKMMPDVSKRTINMIAGYITRYAVKKKEKAKREIEENSLN.

It belongs to the eukaryotic ribosomal protein eS17 family.

The protein is Small ribosomal subunit protein eS17 of Thermoplasma acidophilum (strain ATCC 25905 / DSM 1728 / JCM 9062 / NBRC 15155 / AMRC-C165).